The primary structure comprises 365 residues: 3-isopropylmalate dehydrogenase (365 aa).

Residue 80 to 91 (GPKWGTGEVRPE) participates in NAD(+) binding. Residues R98, R108, R137, and D226 each coordinate substrate. The Mg(2+) site is built by D226, D251, and D255. An NAD(+)-binding site is contributed by 290 to 301 (GSAPDLPKNKVN).

It belongs to the isocitrate and isopropylmalate dehydrogenases family. As to quaternary structure, homodimer. The cofactor is Mg(2+). Requires Mn(2+) as cofactor.

It is found in the cytoplasm. It carries out the reaction (2R,3S)-3-isopropylmalate + NAD(+) = 4-methyl-2-oxopentanoate + CO2 + NADH. The protein operates within amino-acid biosynthesis; L-leucine biosynthesis; L-leucine from 3-methyl-2-oxobutanoate: step 3/4. Its function is as follows. Catalyzes the oxidation of 3-carboxy-2-hydroxy-4-methylpentanoate (3-isopropylmalate) to 3-carboxy-4-methyl-2-oxopentanoate. The product decarboxylates to 4-methyl-2 oxopentanoate. The chain is 3-isopropylmalate dehydrogenase (LEU2) from Candida boidinii (Yeast).